The chain runs to 206 residues: HTH-type transcriptional regulator BetI (206 aa).

The HTH tetR-type domain occupies 8–68; that stretch reads PLRRKALVDA…ETIRSLLRDL (61 aa). The H-T-H motif DNA-binding region spans 31–50; sequence TMSDIAREAGVSAALAHHYF.

It functions in the pathway amine and polyamine biosynthesis; betaine biosynthesis via choline pathway [regulation]. Repressor involved in the biosynthesis of the osmoprotectant glycine betaine. It represses transcription of the choline transporter BetT and the genes of BetAB involved in the synthesis of glycine betaine. This is HTH-type transcriptional regulator BetI from Agrobacterium fabrum (strain C58 / ATCC 33970) (Agrobacterium tumefaciens (strain C58)).